The primary structure comprises 285 residues: ATP synthase gamma chain (285 aa).

The protein belongs to the ATPase gamma chain family. As to quaternary structure, F-type ATPases have 2 components, CF(1) - the catalytic core - and CF(0) - the membrane proton channel. CF(1) has five subunits: alpha(3), beta(3), gamma(1), delta(1), epsilon(1). CF(0) has three main subunits: a, b and c.

The protein localises to the cell membrane. Its function is as follows. Produces ATP from ADP in the presence of a proton gradient across the membrane. The gamma chain is believed to be important in regulating ATPase activity and the flow of protons through the CF(0) complex. This is ATP synthase gamma chain from Geobacillus kaustophilus (strain HTA426).